Here is a 313-residue protein sequence, read N- to C-terminus: Malate dehydrogenase (313 aa).

Residues 11–16 (GAGNIG) and D35 each bind NAD(+). Substrate is bound by residues R84 and R90. Residues N97 and 120 to 122 (VTN) each bind NAD(+). Substrate is bound by residues N122 and R153. The Proton acceptor role is filled by H177.

The protein belongs to the LDH/MDH superfamily. MDH type 3 family.

The catalysed reaction is (S)-malate + NAD(+) = oxaloacetate + NADH + H(+). Catalyzes the reversible oxidation of malate to oxaloacetate. This chain is Malate dehydrogenase, found in Ehrlichia canis (strain Jake).